The following is an 83-amino-acid chain: Normal mucosa of esophagus-specific gene 1 protein (83 aa).

This sequence belongs to the complex I NDUFA4 subunit family. As to expression, expressed mainly in stomach, placenta, small intestine and colon, as well as in normal mucosa of esophagus. Down-regulated in esophageal squamous cell carcinoma.

The protein localises to the nucleus. This Homo sapiens (Human) protein is Normal mucosa of esophagus-specific gene 1 protein (NMES1).